We begin with the raw amino-acid sequence, 149 residues long: MKKEKRQRLIKQFVKEYEIEKQERLVELLAKKDVLVTQATVSRDIRELNLTKVPSQEGLMIYKIFSEEHLQTDIKLKKKLREVVVKIDCVEQLMVIKTLPGNAHVIGVLFDELDWKEKIGCICGNDTCLIISQSKSDREILEERLNLII.

It belongs to the ArgR family.

The protein localises to the cytoplasm. It functions in the pathway amino-acid degradation; L-arginine degradation via ADI pathway. Its function is as follows. Regulates the transcription of the arc operon, involved in arginine catabolism. This is Arginine regulator (argR1) from Bacillus thuringiensis subsp. konkukian (strain 97-27).